The primary structure comprises 376 residues: Heptahelical transmembrane protein ADIPOR1 (376 aa).

Topologically, residues 1–90 (MGEEAAMATM…LSLFSWHNET (90 aa)) are cytoplasmic. The tract at residues 20–46 (PAAAPAPAKGGGSKKKRKQQKREEKRK) is disordered. Residues 91 to 111 (INIWTHLLGFVLFFGLTVLHL) traverse the membrane as a helical segment. Over 112 to 179 (GQYFPQVADL…AAAAATTRWP (68 aa)) the chain is Extracellular. The helical transmembrane segment at 180–200 (FFVFLAGAMFCLLSSAACHLL) threads the bilayer. Residues 201-216 (SCHSHRLNLFLIRLDY) lie on the Cytoplasmic side of the membrane. The helical transmembrane segment at 217–237 (TGIAVMIVVSFFPPIYYIFQC) threads the bilayer. The Extracellular segment spans residues 238–240 (EPR). Residues 241-261 (WQVVYLSAITAAGVATVYALM) form a helical membrane-spanning segment. At 262-274 (SPRLSAARYRAHR) the chain is on the cytoplasmic side. A helical transmembrane segment spans residues 275–295 (ALLFVAMGLSGVVPAAHAVAV). Over 296-303 (NWHEPRRN) the chain is Extracellular. Residues 304 to 324 (VTLAYEGAMAASYLAGTAFYL) traverse the membrane as a helical segment. The Cytoplasmic segment spans residues 325-344 (TRVPERWRPGMFDLCGHSHQ). Residues 345-365 (IFHALVIAGALAHYAAAIVFI) form a helical membrane-spanning segment. Topologically, residues 366-376 (QARDEMGCPAP) are extracellular.

It belongs to the ADIPOR family.

The protein resides in the membrane. Functionally, may play a role in abiotic stress response. The protein is Heptahelical transmembrane protein ADIPOR1 (ADIPOR1) of Oryza sativa subsp. japonica (Rice).